We begin with the raw amino-acid sequence, 335 residues long: Gibberellin 2-beta-dioxygenase 3 (335 aa).

The region spanning 175 to 278 (ESDSCLRMNH…RISMIYFAGP (104 aa)) is the Fe2OG dioxygenase domain. Fe cation contacts are provided by histidine 202, aspartate 204, and histidine 259. Residue arginine 269 is part of the active site.

It belongs to the iron/ascorbate-dependent oxidoreductase family. GA2OX subfamily. Fe(2+) serves as cofactor. In terms of tissue distribution, not expressed in the apex.

It catalyses the reaction gibberellin A1 + 2-oxoglutarate + O2 = gibberellin A8 + succinate + CO2. The protein operates within plant hormone biosynthesis; gibberellin biosynthesis. Catalyzes the 2-beta-hydroxylation of several biologically active gibberellins, leading to the homeostatic regulation of their endogenous level. Catabolism of gibberellins (GAs) plays a central role in plant development. Converts GA9/GA20 to GA51/GA29 and GA4/GA1 to GA34/GA8. The chain is Gibberellin 2-beta-dioxygenase 3 (GA2OX3) from Arabidopsis thaliana (Mouse-ear cress).